Reading from the N-terminus, the 271-residue chain is MRAVFGCAIAVVGIAGSVVAGPADIHLVAAKQSYGFAVASVLPTRGQVVGVAHPVVVTFSAPITNPANRHAAERAVEVKSTPAMTGKFEWLDNDVVQWVPDRFWPAHSTVELSVGSLSSDFKTGPAVVGVASISQHTFTVSIDGVEEGPPPPLPAPHHRVHFGEDGVMPASMGRPEYPTPVGSYTVLSKERSVIMDSSSVGIPVDDPDGYRLSVDYAVRITSRGLYVHSAPWALPALGLENVSHGCISLSREDAEWYYNAVDIGDPVIVQE.

A L,D-TPase catalytic domain is found at 127-270; that stretch reads VVGVASISQH…VDIGDPVIVQ (144 aa). H228 functions as the Proton donor/acceptor in the catalytic mechanism. C246 serves as the catalytic Nucleophile.

It participates in cell wall biogenesis; peptidoglycan biosynthesis. With respect to regulation, is irreversibly inactivated by the beta-lactam carbapenems via the formation of a covalent adduct resulting from acylation of the catalytic Cys. Imipenem is the most efficient drug for in vitro LdtMt3/Rv1433 inactivation. Functionally, probable L,D-transpeptidase that may perform as-yet-unknown cross-linking reactions in M.tuberculosis. Is not able to generate 3-&gt;3 cross-links in peptidoglycan, using tetrapeptide stems as acyl donor substrates. May function in the anchoring of proteins to peptidoglycan. This is Probable L,D-transpeptidase 3 from Mycobacterium tuberculosis (strain ATCC 25618 / H37Rv).